A 517-amino-acid polypeptide reads, in one-letter code: GMP synthase [glutamine-hydrolyzing] (517 aa).

The Glutamine amidotransferase type-1 domain occupies 9–199; sequence RILILDFGSQ…VLNVCGCEGL (191 aa). Catalysis depends on Cys86, which acts as the Nucleophile. Residues His173 and Glu175 contribute to the active site. The GMPS ATP-PPase domain maps to 200 to 392; that stretch reads WTSASIIEDA…LGLPYNMLYR (193 aa). Residue 227–233 participates in ATP binding; it reads SGGVDSS.

As to quaternary structure, homodimer.

The enzyme catalyses XMP + L-glutamine + ATP + H2O = GMP + L-glutamate + AMP + diphosphate + 2 H(+). It functions in the pathway purine metabolism; GMP biosynthesis; GMP from XMP (L-Gln route): step 1/1. Functionally, catalyzes the synthesis of GMP from XMP. The sequence is that of GMP synthase [glutamine-hydrolyzing] from Aliivibrio fischeri (strain MJ11) (Vibrio fischeri).